The primary structure comprises 238 residues: Sugar fermentation stimulation protein homolog (238 aa).

Belongs to the SfsA family.

This Histophilus somni (strain 2336) (Haemophilus somnus) protein is Sugar fermentation stimulation protein homolog.